The chain runs to 102 residues: Large ribosomal subunit protein bL21 (102 aa).

The protein belongs to the bacterial ribosomal protein bL21 family. As to quaternary structure, part of the 50S ribosomal subunit. Contacts protein L20.

This protein binds to 23S rRNA in the presence of protein L20. The protein is Large ribosomal subunit protein bL21 of Geotalea daltonii (strain DSM 22248 / JCM 15807 / FRC-32) (Geobacter daltonii).